Here is a 749-residue protein sequence, read N- to C-terminus: Ribosomal RNA large subunit methyltransferase K/L (749 aa).

A THUMP domain is found at 43 to 154 (QGYKVCLWSR…KDKATIYLDL (112 aa)). Positions 386-406 (VEPVAPKKTNKETPEPINPWT) are disordered.

It belongs to the methyltransferase superfamily. RlmKL family.

Its subcellular location is the cytoplasm. It carries out the reaction guanosine(2445) in 23S rRNA + S-adenosyl-L-methionine = N(2)-methylguanosine(2445) in 23S rRNA + S-adenosyl-L-homocysteine + H(+). It catalyses the reaction guanosine(2069) in 23S rRNA + S-adenosyl-L-methionine = N(2)-methylguanosine(2069) in 23S rRNA + S-adenosyl-L-homocysteine + H(+). Specifically methylates the guanine in position 2445 (m2G2445) and the guanine in position 2069 (m7G2069) of 23S rRNA. This Psychromonas ingrahamii (strain DSM 17664 / CCUG 51855 / 37) protein is Ribosomal RNA large subunit methyltransferase K/L.